The primary structure comprises 635 residues: Sodium- and chloride-dependent transporter XTRP3B (635 aa).

The interval 1 to 38 (MESPSAHAVSLPEDEELQPWGGAGGPGQHPGRPRSTEC) is disordered. Residues 1–56 (MESPSAHAVSLPEDEELQPWGGAGGPGQHPGRPRSTECAHPGVVEKVRPKWDNPLQ) are Cytoplasmic-facing. The chain crosses the membrane as a helical span at residues 57-77 (FLLVCISYAVGLGNVWRFPYL). At 78 to 85 (CQMYGGGN) the chain is on the extracellular side. The chain crosses the membrane as a helical span at residues 86-106 (FLVPYIIMLIVEGMPLLYLEL). The Cytoplasmic portion of the chain corresponds to 107–127 (AVGQRMRQGSIGAWRTISPYL). A helical membrane pass occupies residues 128 to 148 (SGVGIASLVVSFLASVYFNVI). Topologically, residues 149-208 (NTWALWYLFHSFQDPLPWSVCPLNSNHTGYDEECEKASSTQYFWYRKTLNISPSIQENGG) are extracellular. Residue Asn174 is glycosylated (N-linked (GlcNAc...) asparagine). A helical membrane pass occupies residues 209–229 (VQWEPALCLTLAWLMVYLCIL). Residues 230 to 237 (RGTESTGK) are Cytoplasmic-facing. The helical transmembrane segment at 238 to 258 (VVYFTTSLPYFVLIIYLVRGL) threads the bilayer. Residues 259–284 (TLHGATNGLAYMFTPKIEQLANPKAW) lie on the Extracellular side of the membrane. A helical membrane pass occupies residues 285-305 (INAATQIFFSLGLGCGGLIAF). The Cytoplasmic portion of the chain corresponds to 306-319 (ASYNEPSNDCQKHA). Residues 320–340 (LIVSVINSTTAIFSSIVTFSI) traverse the membrane as a helical segment. The Extracellular portion of the chain corresponds to 341-432 (YGFKATFNYE…EAIKNMEVSQ (92 aa)). N-linked (GlcNAc...) asparagine glycosylation occurs at Asn400. The helical transmembrane segment at 433 to 453 (LWSVLYFFMLLTLGMGSMVGT) threads the bilayer. Topologically, residues 454–474 (GTAILTPLTDSKIISSYLPKE) are cytoplasmic. A helical membrane pass occupies residues 475-495 (AISGLVCLLNCAIGMVFTMEA). At 496 to 508 (GNYWFDLFNDYTA) the chain is on the extracellular side. The chain crosses the membrane as a helical span at residues 509 to 529 (TLSLLLIVLVETIAVCYVYGL). At 530–547 (KRFESDLRAMTGRTLSWY) the chain is on the cytoplasmic side. The helical transmembrane segment at 548–568 (WKVMWAFVSPLLIVGLFIFYL) threads the bilayer. The Extracellular segment spans residues 569–597 (SDYILTGTLQYQAWDATQGHVVTKDYPTY). Residues 598–618 (ALAVIGLLVASSTMCIPLVAL) traverse the membrane as a helical segment. Over 619–635 (GTFVTRHFKIREQFSAA) the chain is Cytoplasmic.

The protein belongs to the sodium:neurotransmitter symporter (SNF) (TC 2.A.22) family. SLC6A20 subfamily. Interacts with CLTRN. In terms of tissue distribution, detected only in kidney and lung.

It is found in the apical cell membrane. Its function is as follows. Does not show transporter activity with a range of tested amino acids including proline, glutamine, glutamic acid, leucine, alanine, histidine, glycine and arginine. The polypeptide is Sodium- and chloride-dependent transporter XTRP3B (Slc6a20b) (Mus musculus (Mouse)).